A 358-amino-acid chain; its full sequence is WD repeat-containing protein 53 (358 aa).

6 WD repeats span residues 1–38 (MAVK…AWGE), 43–80 (LGHT…VLDV), 85–123 (DSLD…ILDL), 127–166 (KVIR…LWSL), 173–225 (WITN…RIFR), and 232–270 (EQEL…LWDA). The disordered stretch occupies residues 273 to 311 (EVEKKQKSPTKRTHRKKPKRGTCTKQGGNTNASVTDEEE). Residues 279-294 (KSPTKRTHRKKPKRGT) are compositionally biased toward basic residues. Polar residues predominate over residues 295 to 306 (CTKQGGNTNASV). A WD 7 repeat occupies 314–355 (NILPKLNIEHGEKVNWLLGTKIKGHQNILVADQTSCISVYPL).

This sequence belongs to the WD repeat WDR53 family.

The sequence is that of WD repeat-containing protein 53 (WDR53) from Homo sapiens (Human).